Consider the following 294-residue polypeptide: Mimecan (294 aa).

The first 19 residues, Met1–Pro19, serve as a signal peptide directing secretion. Asn61 carries N-linked (GlcNAc...) asparagine glycosylation. 7 LRR repeats span residues Glu108–Ile127, Lys128–Ile151, Glu152–Leu175, Val176–Ile195, Lys196–Leu221, Glu222–Ile242, and Thr243–Ile273. N-linked (GlcNAc...) asparagine glycosylation is found at Asn241 and Asn254. A disulfide bridge links Cys251 with Cys284.

This sequence belongs to the small leucine-rich proteoglycan (SLRP) family. SLRP class III subfamily. In terms of processing, the composition of the N-linked chains or the substitution of the N-linked sites is different between embryonic and adult tissues. Post-translationally, contains keratan sulfate.

The protein localises to the secreted. It is found in the extracellular space. Its subcellular location is the extracellular matrix. Functionally, induces bone formation in conjunction with TGF-beta-1 or TGF-beta-2. This is Mimecan (OGN) from Gallus gallus (Chicken).